We begin with the raw amino-acid sequence, 198 residues long: Nucleoid occlusion factor SlmA (198 aa).

The HTH tetR-type domain occupies 11 to 71; sequence PNRKHQILES…GLIDFIEESI (61 aa). A DNA-binding region (H-T-H motif) is located at residues 34–53; that stretch reads TTAKLAAEVGFSEAALYRHF.

It belongs to the nucleoid occlusion factor SlmA family. As to quaternary structure, homodimer. Interacts with FtsZ.

Its subcellular location is the cytoplasm. It is found in the nucleoid. Functionally, required for nucleoid occlusion (NO) phenomenon, which prevents Z-ring formation and cell division over the nucleoid. Acts as a DNA-associated cell division inhibitor that binds simultaneously chromosomal DNA and FtsZ, and disrupts the assembly of FtsZ polymers. SlmA-DNA-binding sequences (SBS) are dispersed on non-Ter regions of the chromosome, preventing FtsZ polymerization at these regions. The sequence is that of Nucleoid occlusion factor SlmA from Colwellia psychrerythraea (strain 34H / ATCC BAA-681) (Vibrio psychroerythus).